The sequence spans 376 residues: Glutamate 5-kinase (376 aa).

Residue Lys-18 participates in ATP binding. Positions 58, 145, and 157 each coordinate substrate. ATP contacts are provided by residues 177–178 and 218–224; these read SD and TGGMASK. One can recognise a PUA domain in the interval 280 to 358; it reads TGALTLDAGA…SELPGELRRP (79 aa).

The protein belongs to the glutamate 5-kinase family.

It is found in the cytoplasm. It catalyses the reaction L-glutamate + ATP = L-glutamyl 5-phosphate + ADP. It participates in amino-acid biosynthesis; L-proline biosynthesis; L-glutamate 5-semialdehyde from L-glutamate: step 1/2. Functionally, catalyzes the transfer of a phosphate group to glutamate to form L-glutamate 5-phosphate. This Mycobacterium tuberculosis (strain ATCC 25177 / H37Ra) protein is Glutamate 5-kinase.